A 216-amino-acid chain; its full sequence is Small ribosomal subunit protein uS3 (216 aa).

Residues 38–108 enclose the KH type-2 domain; the sequence is LREFVKKKLH…DLAIDIQEVK (71 aa).

Belongs to the universal ribosomal protein uS3 family. In terms of assembly, part of the 30S ribosomal subunit. Forms a tight complex with proteins S10 and S14.

Its function is as follows. Binds the lower part of the 30S subunit head. Binds mRNA in the 70S ribosome, positioning it for translation. The sequence is that of Small ribosomal subunit protein uS3 from Desulfosudis oleivorans (strain DSM 6200 / JCM 39069 / Hxd3) (Desulfococcus oleovorans).